The primary structure comprises 259 residues: Anti-Pycsar protein Apyc1 (259 aa).

The tract at residues 21 to 233 (YNNSALVTFT…KQQNKIFLMH (213 aa)) is beta-lactamase-like. Histidine 64, histidine 66, aspartate 68, histidine 69, histidine 154, aspartate 178, and histidine 233 together coordinate Zn(2+).

It belongs to the anti-Pycsar protein Apyc1 family. In terms of assembly, homodimer. Zn(2+) serves as cofactor.

The enzyme catalyses 3',5'-cyclic CMP + H2O = CMP + H(+). It catalyses the reaction 3',5'-cyclic UMP + H2O = UMP + H(+). Its function is as follows. Counteracts the host Pycsar antiviral defense system. Phosphodiesterase that enables metal-dependent hydrolysis of host cyclic nucleotide Pycsar defense signals such as cCMP and cUMP. The protein is Anti-Pycsar protein Apyc1 of Bacillus phage vB_BveM-Goe7.